A 71-amino-acid polypeptide reads, in one-letter code: Mitochondrial import protein 1 (71 aa).

A helical transmembrane segment spans residues 22–44; that stretch reads YAAINLGLPFLNGVMLGFGEIFA.

The protein belongs to the MIM1 family. Component of the mitochondrial outer import machinery (MIM) complex containing at least mim1 and mim2. Interacts with mim2. Interacts with mitophagy receptor atg43.

Its subcellular location is the mitochondrion outer membrane. Component of the mitochondrial outer import machinery (MIM) complex that mediates transport of proteins into mitochondrial compartments. Promotes the insertion of tom70 into the outer mitochondrial membrane. Promotes the insertion of atg43 into the outer mitochondrial membrane. The MIM complex cooperates with the receptor tom70 in binding of precursor proteins and promotes their insertion and assembly into the outer membrane. Involved in import of the subset of proteins with multiple alpha-helical transmembrane segments. Required for the assembly of the TOM (translocase of outer membrane) receptor complex, which is responsible for the recognition and translocation of cytosolically synthesized mitochondrial preproteins. The sequence is that of Mitochondrial import protein 1 from Schizosaccharomyces pombe (strain 972 / ATCC 24843) (Fission yeast).